An 836-amino-acid polypeptide reads, in one-letter code: V-type proton ATPase subunit C (836 aa).

The span at 116–144 (LSLRHQRKHQHTHHQNKPQHYHHHHHHHQ) shows a compositional bias: basic residues. Disordered regions lie at residues 116–169 (LSLR…ASAP), 302–403 (APTT…SVQS), 415–453 (KPKRNSKKSSAQQQHETAQLQHQQTTQQHATPLTPQNHN), and 496–544 (PSQL…PLSP). The segment covering 160–169 (ATPPAPASAP) has biased composition (pro residues). Residues 302-316 (APTTSSSVHSSMSRS) are compositionally biased toward low complexity. 2 stretches are compositionally biased toward polar residues: residues 319–348 (KRLNNNTCSINNNKLSFRSGSHVSQLHLAT) and 364–374 (TNPLQSPVQKS). Residues 425 to 450 (AQQQHETAQLQHQQTTQQHATPLTPQ) are compositionally biased toward low complexity. A compositionally biased stretch (polar residues) spans 496-511 (PSQLNINNGFNLTPTH). Residues 512–529 (RSSPVSSCCGSSSQGRSS) show a composition bias toward low complexity.

This sequence belongs to the V-ATPase C subunit family. As to quaternary structure, V-ATPase is a heteromultimeric enzyme made up of two complexes: the ATP-hydrolytic V1 complex and the proton translocation V0 complex. The V1 complex consists of three catalytic AB heterodimers that form a heterohexamer, three peripheral stalks each consisting of EG heterodimers, one central rotor including subunits D and F, and the regulatory subunits C and H. The proton translocation complex V0 consists of the proton transport subunit a, a ring of proteolipid subunits c9c'', rotary subunit d, subunits e and f, and the accessory subunits VhaAC45 and ATP6AP2. In terms of tissue distribution, in larvae, expressed in the ring gland, CNS, imaginal disks and lymph gland.

Its function is as follows. Subunit of the V1 complex of vacuolar(H+)-ATPase (V-ATPase), a multisubunit enzyme composed of a peripheral complex (V1) that hydrolyzes ATP and a membrane integral complex (V0) that translocates protons. V-ATPase is responsible for acidifying and maintaining the pH of intracellular compartments and in some cell types, is targeted to the plasma membrane, where it is responsible for acidifying the extracellular environment. Subunit C is necessary for the assembly of the catalytic sector of the enzyme and is likely to have a specific function in its catalytic activity. In enterocytes, acts as part of a pHCl-2 sensory pathway which mediates Tor-dependent larval growth and metabolism in response to zinc availability. Likely acts in maintaining enterocyte lysosomal acidification which consequently promotes Tor activation at the lysosome membrane. The chain is V-type proton ATPase subunit C (Vha44) from Drosophila melanogaster (Fruit fly).